The sequence spans 303 residues: Caspase-7 (303 aa).

Residues 1-21 (MADDQGCIEEQGVEDSANEDS) are compositionally biased toward acidic residues. The tract at residues 1-30 (MADDQGCIEEQGVEDSANEDSVDAKPDRSS) is disordered. An N-acetylalanine modification is found at A2. Residues 2–23 (ADDQGCIEEQGVEDSANEDSVD) constitute a propeptide, N-terminally processed. S30 is modified (phosphoserine; by PAK2). A Phosphoserine modification is found at S37. An exosite region spans residues 38–41 (KKKK). Residues 76–87 (KNFDKVTGMGVR) form a loop L1 region. The active site involves H144. Residue T173 is modified to Phosphothreonine; by PAK2. C186 is a catalytic residue. The loop L2 stretch occupies residues 187-196 (RGTELDDGIQ). The propeptide occupies 199 to 206 (SGPINDTD). The loop L3 stretch occupies residues 226–238 (VPGYYSWRSPGRG). The residue at position 233 (R233) is a (Microbial infection) ADP-riboxanated arginine. S239 is modified (phosphoserine; by PAK2). The segment at 274-288 (ESQSDDPHFHEKKQI) is loop L4.

This sequence belongs to the peptidase C14A family. As to quaternary structure, heterotetramer that consists of two anti-parallel arranged heterodimers, each one formed by a 20 kDa (p20) and a 11 kDa (p11) subunit. Interacts with XIAP (via its second BIR domain); inhibiting CASP7 activity. Interacts with BIRC6/bruce. Interacts with ATXN3 (short isoform 1). Interacts with HSPA5. Post-translationally, cleavage by different proteases, such as granzyme B (GZMB), caspase-1 (CASP1), caspase-8 (CASP8), caspase-9 (CASP9) or caspase-10 (CASP10) generate the two active subunits. Its involvement in different programmed cell death processes is probably specified by the protease that activates CASP7. Cleaved and activated by initiator caspases (CASP8, CASP9 and/or CASP10), leading to execution phase of apoptosis. Cleavage and maturation by GZMB regulates granzyme-mediated programmed cell death. Cleaved and activated by CASP1 in response to bacterial infection. Propeptide domains can also be cleaved efficiently by CASP3. Active heterodimers between the small subunit of caspase-7 and the large subunit of CASP3, and vice versa, also occur. Also cleaved at the N-terminus at alternative sites by CAPN1, leading to its activation. In terms of processing, phosphorylation at Ser-30 and Ser-239 by PAK2 inhibits its activity. Phosphorylation at Ser-30 prevents cleavage and activation by initiator caspase CASP9, while phosphorylation at Ser-239 prevents thiol protease activity by preventing substrate-binding. (Microbial infection) ADP-riboxanation by C.violaceum CopC blocks CASP7 processing, preventing CASP7 activation and ability to recognize and cleave substrates. Post-translationally, ubiquitinated by BIRC6; this activity is inhibited by DIABLO/SMAC. As to expression, highly expressed in lung, skeletal muscle, liver, kidney, spleen and heart, and moderately in testis. No expression in the brain.

It is found in the cytoplasm. The protein localises to the cytosol. The protein resides in the nucleus. Its subcellular location is the secreted. It localises to the extracellular space. It catalyses the reaction Strict requirement for an Asp residue at position P1 and has a preferred cleavage sequence of Asp-Glu-Val-Asp-|-.. During activation, the N-terminal disordered prodomain is removed by cleavage. Concomitantly, double cleavage gives rise to a large Caspase-7 subunit p20 and a small Caspase-7 subunit p11. The two large and two small subunits then assemble to form the active CASP7 complex. Can be cleaved and activated by different caspases, depending on the context. Cleaved and activated by initiator caspases (CASP8, CASP9 and/or CASP10), leading to execution phase of apoptosis. Inhibited by XIAP, which directly binds to the active site pocket and obstructs substrate entry. Cleavage and maturation by GZMB regulates granzyme-mediated programmed cell death. Cleavage and maturation by CASP1 regulates pyroptosis. Phosphorylation at Ser-30 and Ser-239 by PAK2 inhibits its activity. Inhibited by isatin sulfonamides. Inhibited by 2-(2,4-Dichlorophenoxy)- N-(2-mercapto-ethyl)-acetamide (DICA) and 5-Fluoro-1H-indole-2- carboxylic acid (2-mercapto-ethyl)-amide (FICA) allosteric inhibitors, which disrupt an interaction between Arg-187 and Tyr-223. Specifically inhibited by DARPin D7.18 and D7.43, which specifically bind to the precursor CASP7 and prevent its processing and activation. Inhibited by BIRC6; following inhibition of BIRC6-caspase binding by DIABLO/SMAC, BIRC6 is subjected to caspase cleavage, leading to an increase in active caspases. Thiol protease involved in different programmed cell death processes, such as apoptosis, pyroptosis or granzyme-mediated programmed cell death, by proteolytically cleaving target proteins. Has a marked preference for Asp-Glu-Val-Asp (DEVD) consensus sequences, with some plasticity for alternate non-canonical sequences. Its involvement in the different programmed cell death processes is probably determined by upstream proteases that activate CASP7. Acts as an effector caspase involved in the execution phase of apoptosis: following cleavage and activation by initiator caspases (CASP8, CASP9 and/or CASP10), mediates execution of apoptosis by catalyzing cleavage of proteins, such as CLSPN, PARP1, PTGES3 and YY1. Compared to CASP3, acts as a minor executioner caspase and cleaves a limited set of target proteins. Acts as a key regulator of the inflammatory response in response to bacterial infection by catalyzing cleavage and activation of the sphingomyelin phosphodiesterase SMPD1 in the extracellular milieu, thereby promoting membrane repair. Regulates pyroptosis in intestinal epithelial cells: cleaved and activated by CASP1 in response to S.typhimurium infection, promoting its secretion to the extracellular milieu, where it catalyzes activation of SMPD1, generating ceramides that repair membranes and counteract the action of gasdermin-D (GSDMD) pores. Regulates granzyme-mediated programmed cell death in hepatocytes: cleaved and activated by granzyme B (GZMB) in response to bacterial infection, promoting its secretion to the extracellular milieu, where it catalyzes activation of SMPD1, generating ceramides that repair membranes and counteract the action of perforin (PRF1) pores. Following cleavage by CASP1 in response to inflammasome activation, catalyzes processing and inactivation of PARP1, alleviating the transcription repressor activity of PARP1. Acts as an inhibitor of type I interferon production during virus-induced apoptosis by mediating cleavage of antiviral proteins CGAS, IRF3 and MAVS, thereby preventing cytokine overproduction. Cleaves and activates sterol regulatory element binding proteins (SREBPs). Cleaves phospholipid scramblase proteins XKR4, XKR8 and XKR9. In case of infection, catalyzes cleavage of Kaposi sarcoma-associated herpesvirus protein ORF57, thereby preventing expression of viral lytic genes. Cleaves BIRC6 following inhibition of BIRC6-caspase binding by DIABLO/SMAC. Its function is as follows. Lacks enzymatic activity. The polypeptide is Caspase-7 (Homo sapiens (Human)).